The following is a 360-amino-acid chain: GDSL esterase/lipase At2g31540 (360 aa).

A signal peptide spans 1-23 (MSTSKAITLTLFIATTLLAPCNA). Catalysis depends on Ser-42, which acts as the Nucleophile. N-linked (GlcNAc...) asparagine glycans are attached at residues Asn-104 and Asn-326. Active-site residues include Asp-334 and His-337.

This sequence belongs to the 'GDSL' lipolytic enzyme family.

Its subcellular location is the secreted. The chain is GDSL esterase/lipase At2g31540 from Arabidopsis thaliana (Mouse-ear cress).